The sequence spans 159 residues: Neuroglobin (159 aa).

The 149-residue stretch at Lys-3–Ala-151 folds into the Globin domain. Heme b-binding residues include His-66 and His-98.

This sequence belongs to the globin family. Monomer. Homodimers and homotetramers. Mainly monomeric but also detected as part of homodimers and homotetramers.

The protein localises to the cytoplasm. The protein resides in the cytosol. It is found in the mitochondrion matrix. It carries out the reaction Fe(III)-heme b-[protein] + nitric oxide + H2O = Fe(II)-heme b-[protein] + nitrite + 2 H(+). Monomeric globin with a bis-histidyl six-coordinate heme-iron atom through which it can bind dioxygen, carbon monoxide and nitric oxide. Could help transport oxygen and increase its availability to the metabolically active neuronal tissues, though its low quantity in tissues as well as its high affinity for dioxygen, which may limit its oxygen-releasing ability, argue against it. The ferrous/deoxygenated form exhibits a nitrite reductase activity and it could produce nitric oxide which in turn inhibits cellular respiration in response to hypoxia. In its ferrous/deoxygenated state, it may also exhibit GDI (Guanine nucleotide Dissociation Inhibitor) activity toward heterotrimeric G-alpha proteins, thereby regulating signal transduction to facilitate neuroprotective responses in the wake of hypoxia and associated oxidative stress. The sequence is that of Neuroglobin (ngb) from Chaenocephalus aceratus (Blackfin icefish).